Consider the following 360-residue polypeptide: 3-dehydroquinate synthase (360 aa).

Residues 104–108, 128–129, Lys-141, and 168–171 contribute to the NAD(+) site; these read GVIGD, TT, and FLDT. Zn(2+) contacts are provided by Glu-183, His-243, and His-260.

Belongs to the sugar phosphate cyclases superfamily. Dehydroquinate synthase family. Co(2+) is required as a cofactor. The cofactor is Zn(2+). It depends on NAD(+) as a cofactor.

It localises to the cytoplasm. The catalysed reaction is 7-phospho-2-dehydro-3-deoxy-D-arabino-heptonate = 3-dehydroquinate + phosphate. The protein operates within metabolic intermediate biosynthesis; chorismate biosynthesis; chorismate from D-erythrose 4-phosphate and phosphoenolpyruvate: step 2/7. Catalyzes the conversion of 3-deoxy-D-arabino-heptulosonate 7-phosphate (DAHP) to dehydroquinate (DHQ). In Streptococcus equi subsp. equi (strain 4047), this protein is 3-dehydroquinate synthase.